A 552-amino-acid chain; its full sequence is Hydroxylamine reductase (552 aa).

[2Fe-2S] cluster-binding residues include cysteine 5, cysteine 8, cysteine 20, and cysteine 27. The hybrid [4Fe-2O-2S] cluster site is built by histidine 251, glutamate 275, cysteine 319, cysteine 407, cysteine 435, cysteine 460, glutamate 494, and lysine 496. Position 407 is a cysteine persulfide (cysteine 407).

This sequence belongs to the HCP family. It depends on [2Fe-2S] cluster as a cofactor. Hybrid [4Fe-2O-2S] cluster serves as cofactor.

Its subcellular location is the cytoplasm. The catalysed reaction is A + NH4(+) + H2O = hydroxylamine + AH2 + H(+). In terms of biological role, catalyzes the reduction of hydroxylamine to form NH(3) and H(2)O. The polypeptide is Hydroxylamine reductase (Escherichia coli (strain UTI89 / UPEC)).